Here is a 362-residue protein sequence, read N- to C-terminus: Cobalt-precorrin-5B C(1)-methyltransferase (362 aa).

The protein belongs to the CbiD family.

The catalysed reaction is Co-precorrin-5B + S-adenosyl-L-methionine = Co-precorrin-6A + S-adenosyl-L-homocysteine. Its pathway is cofactor biosynthesis; adenosylcobalamin biosynthesis; cob(II)yrinate a,c-diamide from sirohydrochlorin (anaerobic route): step 6/10. Catalyzes the methylation of C-1 in cobalt-precorrin-5B to form cobalt-precorrin-6A. The sequence is that of Cobalt-precorrin-5B C(1)-methyltransferase from Burkholderia lata (strain ATCC 17760 / DSM 23089 / LMG 22485 / NCIMB 9086 / R18194 / 383).